We begin with the raw amino-acid sequence, 167 residues long: Large ribosomal subunit protein uL15 (167 aa).

A compositionally biased stretch (polar residues) spans 1–10 (MKLNQISDNP). Residues 1-37 (MKLNQISDNPGATKDRMRVGRGIGSGKGKTAGRGVKG) are disordered. Over residues 21–35 (RGIGSGKGKTAGRGV) the composition is skewed to gly residues.

This sequence belongs to the universal ribosomal protein uL15 family. In terms of assembly, part of the 50S ribosomal subunit.

Binds to the 23S rRNA. This is Large ribosomal subunit protein uL15 from Methylobacterium radiotolerans (strain ATCC 27329 / DSM 1819 / JCM 2831 / NBRC 15690 / NCIMB 10815 / 0-1).